Reading from the N-terminus, the 422-residue chain is Serine--tRNA ligase (422 aa).

Residue 227-229 (TSE) participates in L-serine binding. Residues 258-260 (RRE) and V274 each bind ATP. E281 is an L-serine binding site. 345–348 (ELTS) is a binding site for ATP. Position 380 (T380) interacts with L-serine.

The protein belongs to the class-II aminoacyl-tRNA synthetase family. Type-1 seryl-tRNA synthetase subfamily. As to quaternary structure, homodimer. The tRNA molecule binds across the dimer.

It localises to the cytoplasm. It carries out the reaction tRNA(Ser) + L-serine + ATP = L-seryl-tRNA(Ser) + AMP + diphosphate + H(+). It catalyses the reaction tRNA(Sec) + L-serine + ATP = L-seryl-tRNA(Sec) + AMP + diphosphate + H(+). It participates in aminoacyl-tRNA biosynthesis; selenocysteinyl-tRNA(Sec) biosynthesis; L-seryl-tRNA(Sec) from L-serine and tRNA(Sec): step 1/1. Its function is as follows. Catalyzes the attachment of serine to tRNA(Ser). Is also able to aminoacylate tRNA(Sec) with serine, to form the misacylated tRNA L-seryl-tRNA(Sec), which will be further converted into selenocysteinyl-tRNA(Sec). This Thermobifida fusca (strain YX) protein is Serine--tRNA ligase.